We begin with the raw amino-acid sequence, 228 residues long: uncharacterized protein (228 aa).

Residues 1 to 28 (MRKKRVITCVMAASLTLGSLLPAGYASA) form the signal peptide.

This is an uncharacterized protein from Bacillus subtilis (strain 168).